The primary structure comprises 690 residues: Tripartite terminase subunit 3 (690 aa).

Residues 226–233 (IPRRHGKT) carry the Walker A motif motif. The Walker B motif motif lies at 321 to 326 (LLFVDE). Catalysis depends on glutamate 326, which acts as the For ATPase activity. Catalysis depends on for nuclease activity residues aspartate 481, glutamate 555, and aspartate 667.

This sequence belongs to the herpesviridae TRM3 protein family. In terms of assembly, interacts with the terminase subunits TRM1 and TRM2. Interacts with portal protein.

The protein resides in the host nucleus. In terms of biological role, component of the molecular motor that translocates viral genomic DNA in empty capsid during DNA packaging. Forms a tripartite terminase complex together with TRM1 and TRM2 in the host cytoplasm. Once the complex reaches the host nucleus, it interacts with the capsid portal vertex. This portal forms a ring in which genomic DNA is translocated into the capsid. TRM3 carries an RNase H-like nuclease activity that plays an important role for the cleavage of concatemeric viral DNA into unit length genomes. In Homo sapiens (Human), this protein is Tripartite terminase subunit 3.